Consider the following 391-residue polypeptide: 5-amino-6-(D-ribitylamino)uracil--L-tyrosine 4-hydroxyphenyl transferase (391 aa).

In terms of domain architecture, Radical SAM core spans 55–302; sequence VTYVINRNIN…GAVARIYLGN (248 aa). Positions 69, 73, and 76 each coordinate [4Fe-4S] cluster.

It belongs to the radical SAM superfamily. CofH family. Consists of two subunits, CofG and CofH. It depends on [4Fe-4S] cluster as a cofactor.

The catalysed reaction is 5-amino-6-(D-ribitylamino)uracil + L-tyrosine + S-adenosyl-L-methionine = 5-amino-5-(4-hydroxybenzyl)-6-(D-ribitylimino)-5,6-dihydrouracil + 2-iminoacetate + 5'-deoxyadenosine + L-methionine + H(+). It participates in cofactor biosynthesis; coenzyme F0 biosynthesis. In terms of biological role, catalyzes the radical-mediated synthesis of 5-amino-5-(4-hydroxybenzyl)-6-(D-ribitylimino)-5,6-dihydrouracil from 5-amino-6-(D-ribitylamino)uracil and L-tyrosine. In Trichormus variabilis (strain ATCC 29413 / PCC 7937) (Anabaena variabilis), this protein is 5-amino-6-(D-ribitylamino)uracil--L-tyrosine 4-hydroxyphenyl transferase.